A 595-amino-acid polypeptide reads, in one-letter code: Phosphomethylpyrimidine synthase (595 aa).

A compositionally biased stretch (basic and acidic residues) spans 97–120 (GRDVRPEDNGFTKDDDPRAAREVF). The tract at residues 97–134 (GRDVRPEDNGFTKDDDPRAAREVFPRTSSHKPLRAKKG) is disordered. Positions 124-133 (SSHKPLRAKK) are enriched in basic residues. Substrate contacts are provided by residues N202, M231, Y260, H296, 316–318 (SRG), 357–360 (DGLR), and E396. H400 contacts Zn(2+). Y423 provides a ligand contact to substrate. H464 is a binding site for Zn(2+). Residues C544, C547, and C552 each coordinate [4Fe-4S] cluster.

It belongs to the ThiC family. The cofactor is [4Fe-4S] cluster.

The catalysed reaction is 5-amino-1-(5-phospho-beta-D-ribosyl)imidazole + S-adenosyl-L-methionine = 4-amino-2-methyl-5-(phosphooxymethyl)pyrimidine + CO + 5'-deoxyadenosine + formate + L-methionine + 3 H(+). The protein operates within cofactor biosynthesis; thiamine diphosphate biosynthesis. Catalyzes the synthesis of the hydroxymethylpyrimidine phosphate (HMP-P) moiety of thiamine from aminoimidazole ribotide (AIR) in a radical S-adenosyl-L-methionine (SAM)-dependent reaction. This Halalkalibacterium halodurans (strain ATCC BAA-125 / DSM 18197 / FERM 7344 / JCM 9153 / C-125) (Bacillus halodurans) protein is Phosphomethylpyrimidine synthase.